The chain runs to 476 residues: UDP-N-acetylmuramate--L-alanine ligase (476 aa).

ATP is bound at residue glycine 107 to threonine 113.

Belongs to the MurCDEF family.

It localises to the cytoplasm. It catalyses the reaction UDP-N-acetyl-alpha-D-muramate + L-alanine + ATP = UDP-N-acetyl-alpha-D-muramoyl-L-alanine + ADP + phosphate + H(+). It participates in cell wall biogenesis; peptidoglycan biosynthesis. Its function is as follows. Cell wall formation. In Roseiflexus castenholzii (strain DSM 13941 / HLO8), this protein is UDP-N-acetylmuramate--L-alanine ligase.